The sequence spans 89 residues: Small ribosomal subunit protein uS15 (89 aa).

Belongs to the universal ribosomal protein uS15 family. As to quaternary structure, part of the 30S ribosomal subunit. Forms a bridge to the 50S subunit in the 70S ribosome, contacting the 23S rRNA.

Functionally, one of the primary rRNA binding proteins, it binds directly to 16S rRNA where it helps nucleate assembly of the platform of the 30S subunit by binding and bridging several RNA helices of the 16S rRNA. Forms an intersubunit bridge (bridge B4) with the 23S rRNA of the 50S subunit in the ribosome. The protein is Small ribosomal subunit protein uS15 of Staphylococcus epidermidis (strain ATCC 12228 / FDA PCI 1200).